Consider the following 333-residue polypeptide: 2-oxoglutarate-dependent dioxygenase 21, chloroplastic (333 aa).

The N-terminal 43 residues, 1–43, are a transit peptide targeting the chloroplast; the sequence is MPAVAGSLYMASQHKGVPPPLPPPPRPLPVINLGRLTMDSASR. The Fe2OG dioxygenase domain maps to 180–281; it reads GVQFVALNNY…RISIASIHGL (102 aa). Residues H205, D207, and H262 each contribute to the Fe cation site. R272 provides a ligand contact to 2-oxoglutarate.

It belongs to the iron/ascorbate-dependent oxidoreductase family. The cofactor is Fe(2+). L-ascorbate serves as cofactor. As to expression, expressed in roots.

It is found in the plastid. The protein localises to the chloroplast. The catalysed reaction is melatonin + 2-oxoglutarate + O2 = 2-hydroxymelatonin + succinate + CO2. Its function is as follows. Involved in melatonin degradation. Catalyzes the hydroxylation of melatonin to produce 2-hydroxymelatonin. The polypeptide is 2-oxoglutarate-dependent dioxygenase 21, chloroplastic (Oryza sativa subsp. japonica (Rice)).